Here is a 140-residue protein sequence, read N- to C-terminus: Acyl-coenzyme A thioesterase 13 (140 aa).

Residue methionine 1 is modified to N-acetylmethionine. The residue at position 2 (threonine 2) is an N-acetylthreonine; in Acyl-coenzyme A thioesterase 13, N-terminally processed. An N6-acetyllysine mark is found at lysine 27, lysine 37, and lysine 43. Glutamate 46 provides a ligand contact to CoA. Residues asparagine 50 and glycine 81 each coordinate substrate. Residues serine 83, 90–95 (YMSPAK), and 108–113 (KQGKTL) contribute to the CoA site. Lysine 108 and lysine 127 each carry N6-acetyllysine. Residue histidine 137 coordinates CoA.

The protein belongs to the thioesterase PaaI family. In terms of assembly, homotetramer. Interacts with PCTP.

The protein resides in the cytoplasm. It is found in the cytosol. Its subcellular location is the mitochondrion. The protein localises to the nucleus. It localises to the cytoskeleton. The protein resides in the spindle. The enzyme catalyses a fatty acyl-CoA + H2O = a fatty acid + CoA + H(+). The catalysed reaction is decanoyl-CoA + H2O = decanoate + CoA + H(+). It carries out the reaction octanoyl-CoA + H2O = octanoate + CoA + H(+). It catalyses the reaction butanoyl-CoA + H2O = butanoate + CoA + H(+). The enzyme catalyses hexanoyl-CoA + H2O = hexanoate + CoA + H(+). The catalysed reaction is tetradecanoyl-CoA + H2O = tetradecanoate + CoA + H(+). It carries out the reaction hexadecanoyl-CoA + H2O = hexadecanoate + CoA + H(+). It catalyses the reaction dodecanoyl-CoA + H2O = dodecanoate + CoA + H(+). The enzyme catalyses (9Z)-octadecenoyl-CoA + H2O = (9Z)-octadecenoate + CoA + H(+). The catalysed reaction is (5Z,8Z,11Z,14Z)-eicosatetraenoyl-CoA + H2O = (5Z,8Z,11Z,14Z)-eicosatetraenoate + CoA + H(+). Its function is as follows. Catalyzes the hydrolysis of acyl-CoAs into free fatty acids and coenzyme A (CoASH), regulating their respective intracellular levels. Has acyl-CoA thioesterase activity towards medium (C12) and long-chain (C18) fatty acyl-CoA substrates. Can also hydrolyze 3-hydroxyphenylacetyl-CoA and 3,4-dihydroxyphenylacetyl-CoA (in vitro). May play a role in controlling adaptive thermogenesis. The chain is Acyl-coenzyme A thioesterase 13 from Homo sapiens (Human).